A 557-amino-acid polypeptide reads, in one-letter code: Dihydroxy-acid dehydratase (557 aa).

Residue Asp78 coordinates Mg(2+). Cys119 is a binding site for [2Fe-2S] cluster. 2 residues coordinate Mg(2+): Asp120 and Lys121. Lys121 carries the post-translational modification N6-carboxylysine. Cys192 contacts [2Fe-2S] cluster. Residue Glu442 coordinates Mg(2+). Ser468 acts as the Proton acceptor in catalysis.

The protein belongs to the IlvD/Edd family. In terms of assembly, homodimer. [2Fe-2S] cluster is required as a cofactor. Mg(2+) serves as cofactor.

The catalysed reaction is (2R)-2,3-dihydroxy-3-methylbutanoate = 3-methyl-2-oxobutanoate + H2O. It carries out the reaction (2R,3R)-2,3-dihydroxy-3-methylpentanoate = (S)-3-methyl-2-oxopentanoate + H2O. Its pathway is amino-acid biosynthesis; L-isoleucine biosynthesis; L-isoleucine from 2-oxobutanoate: step 3/4. It participates in amino-acid biosynthesis; L-valine biosynthesis; L-valine from pyruvate: step 3/4. Its function is as follows. Functions in the biosynthesis of branched-chain amino acids. Catalyzes the dehydration of (2R,3R)-2,3-dihydroxy-3-methylpentanoate (2,3-dihydroxy-3-methylvalerate) into 2-oxo-3-methylpentanoate (2-oxo-3-methylvalerate) and of (2R)-2,3-dihydroxy-3-methylbutanoate (2,3-dihydroxyisovalerate) into 2-oxo-3-methylbutanoate (2-oxoisovalerate), the penultimate precursor to L-isoleucine and L-valine, respectively. The protein is Dihydroxy-acid dehydratase of Bacillus cytotoxicus (strain DSM 22905 / CIP 110041 / 391-98 / NVH 391-98).